We begin with the raw amino-acid sequence, 684 residues long: Glycine--tRNA ligase beta subunit (684 aa).

The protein belongs to the class-II aminoacyl-tRNA synthetase family. In terms of assembly, tetramer of two alpha and two beta subunits.

It localises to the cytoplasm. It carries out the reaction tRNA(Gly) + glycine + ATP = glycyl-tRNA(Gly) + AMP + diphosphate. The sequence is that of Glycine--tRNA ligase beta subunit from Pseudomonas aeruginosa (strain ATCC 15692 / DSM 22644 / CIP 104116 / JCM 14847 / LMG 12228 / 1C / PRS 101 / PAO1).